Consider the following 319-residue polypeptide: Acetyl esterase (319 aa).

Residues histidine 91 to glycine 93 carry the Involved in the stabilization of the negatively charged intermediate by the formation of the oxyanion hole motif. Catalysis depends on residues serine 165, aspartate 262, and histidine 292.

It belongs to the 'GDXG' lipolytic enzyme family. In terms of assembly, homodimer. Interacts with MalT and MelA.

It is found in the cytoplasm. Its function is as follows. Displays esterase activity towards short chain fatty esters (acyl chain length of up to 8 carbons). Able to hydrolyze triacetylglycerol (triacetin) and tributyrylglycerol (tributyrin), but not trioleylglycerol (triolein) or cholesterol oleate. Negatively regulates MalT activity by antagonizing maltotriose binding. Inhibits MelA galactosidase activity. This chain is Acetyl esterase, found in Escherichia coli O127:H6 (strain E2348/69 / EPEC).